The following is a 474-amino-acid chain: 3-isopropylmalate dehydratase large subunit (474 aa).

Residues 293–313 (GTTPGQGIGITEEIPAPEDLP) form a disordered region. Cysteine 348, cysteine 408, and cysteine 411 together coordinate [4Fe-4S] cluster.

It belongs to the aconitase/IPM isomerase family. LeuC type 1 subfamily. In terms of assembly, heterodimer of LeuC and LeuD. It depends on [4Fe-4S] cluster as a cofactor.

The enzyme catalyses (2R,3S)-3-isopropylmalate = (2S)-2-isopropylmalate. It functions in the pathway amino-acid biosynthesis; L-leucine biosynthesis; L-leucine from 3-methyl-2-oxobutanoate: step 2/4. Its function is as follows. Catalyzes the isomerization between 2-isopropylmalate and 3-isopropylmalate, via the formation of 2-isopropylmaleate. The polypeptide is 3-isopropylmalate dehydratase large subunit (Natronomonas pharaonis (strain ATCC 35678 / DSM 2160 / CIP 103997 / JCM 8858 / NBRC 14720 / NCIMB 2260 / Gabara) (Halobacterium pharaonis)).